Reading from the N-terminus, the 172-residue chain is Large ribosomal subunit protein uL10 (172 aa).

This sequence belongs to the universal ribosomal protein uL10 family. As to quaternary structure, part of the ribosomal stalk of the 50S ribosomal subunit. The N-terminus interacts with L11 and the large rRNA to form the base of the stalk. The C-terminus forms an elongated spine to which L12 dimers bind in a sequential fashion forming a multimeric L10(L12)X complex.

Forms part of the ribosomal stalk, playing a central role in the interaction of the ribosome with GTP-bound translation factors. This chain is Large ribosomal subunit protein uL10 (rplJ), found in Chlamydia trachomatis serovar D (strain ATCC VR-885 / DSM 19411 / UW-3/Cx).